The chain runs to 60 residues: MAVPKRRTSRWRRNQRRAQAFFAKLKSFNMVKCPNCGEFAMPHRACPYCGYYRDKQVLEV.

Belongs to the bacterial ribosomal protein bL32 family.

This is Large ribosomal subunit protein bL32 from Hydrogenobaculum sp. (strain Y04AAS1).